The sequence spans 153 residues: Natriuretic peptides A (153 aa).

The signal sequence occupies residues 1-25 (MGSFSTITASFLLFLACQLLWQTGA). 2 propeptides span residues 26 to 123 (NPVY…AAPR) and 93 to 103 (DGGALGRGSWD). The segment at 62-104 (VLSEQNEEAGAALSPLPEVPPWAGEVNPAQRDGGALGRGSWDS) is disordered. Ser129 carries the phosphoserine modification. A disulfide bridge connects residues Cys130 and Cys146. Residues 147-151 (NSFRY) form an important for degradation of atrial natriuretic peptide by IDE region.

It belongs to the natriuretic peptide family. In terms of assembly, homodimer; disulfide-linked antiparallel dimer. The precursor molecule is proteolytically cleaved by CORIN at Arg-123 to produce the atrial natriuretic peptide. Undergoes further proteolytic cleavage by unknown proteases to give rise to long-acting natriuretic peptide, vessel dilator and kaliuretic peptide. Additional processing gives rise to the auriculin and atriopeptin peptides. In the kidneys, alternative processing by an unknown protease results in the peptide urodilatin. Post-translationally, cleavage by MME initiates degradation of the factor and thereby regulates its activity. Degradation by IDE results in reduced activation of NPR1 (in vitro). During IDE degradation, the resulting products can temporarily stimulate NPR2 to produce cGMP, before the fragments are completely degraded and inactivated by IDE (in vitro). In terms of processing, degraded by IDE. Phosphorylation on Ser-129 decreases vasorelaxant activity.

It localises to the secreted. Its subcellular location is the perikaryon. The protein resides in the cell projection. Its function is as follows. Hormone that plays a key role in mediating cardio-renal homeostasis, and is involved in vascular remodeling and regulating energy metabolism. Acts by specifically binding and stimulating NPR1 to produce cGMP, which in turn activates effector proteins, such as PRKG1, that drive various biological responses. Regulates vasodilation, natriuresis, diuresis and aldosterone synthesis and is therefore essential for regulating blood pressure, controlling the extracellular fluid volume and maintaining the fluid-electrolyte balance. Also involved in inhibiting cardiac remodeling and cardiac hypertrophy by inducing cardiomyocyte apoptosis and attenuating the growth of cardiomyocytes and fibroblasts. Plays a role in female pregnancy by promoting trophoblast invasion and spiral artery remodeling in uterus, and thus prevents pregnancy-induced hypertension. In adipose tissue, acts in various cGMP- and PKG-dependent pathways to regulate lipid metabolism and energy homeostasis. This includes up-regulating lipid metabolism and mitochondrial oxygen utilization by activating the AMP-activated protein kinase (AMPK), and increasing energy expenditure by acting via MAPK11 to promote the UCP1-dependent thermogenesis of brown adipose tissue. Binds the clearance receptor NPR3 which removes the hormone from circulation. Functionally, may have a role in cardio-renal homeostasis through regulation of natriuresis, diuresis, vasodilation, and inhibiting aldosterone synthesis. In vitro, promotes the production of cGMP and induces vasodilation. May promote natriuresis, at least in part, by enhancing prostaglandin E2 synthesis resulting in the inhibition of renal Na+-K+-ATPase. However reports on the involvement of this peptide in mammal blood volume and blood pressure homeostasis are conflicting; according to a report, in vivo it is not sufficient to activate cGMP and does not inhibit collecting duct transport nor effect diuresis and natriuresis. Appears to bind to specific receptors that are distinct from the receptors bound by atrial natriuretic peptide and vessel dilator. Possibly enhances protein excretion in urine by decreasing proximal tubular protein reabsorption. In terms of biological role, may have a role in cardio-renal homeostasis through regulation of natriuresis, diuresis, and vasodilation. In vitro, promotes the production of cGMP and induces vasodilation. May promote natriuresis, at least in part, by enhancing prostaglandin E2 synthesis resulting in the inhibition of renal Na+-K+-ATPase. However reports on the involvement of this peptide in mammal blood volume and blood pressure homeostasis are conflicting; according to a report it is not sufficient to activate cGMP and does not inhibit collecting duct transport nor effect diuresis and natriuresis. Appears to bind to specific receptors that are distinct from the receptors bound by the atrial natriuretic and long-acting natriuretic peptides. Possibly functions in protein excretion in urine by maintaining the integrity of the proximal tubules and enhancing protein excretion by decreasing proximal tubular protein reabsorption. May have a role in cardio-renal homeostasis through regulation of diuresis and inhibiting aldosterone synthesis. In vitro, promotes the production of cGMP and induces vasodilation. May promote natriuresis, at least in part, by enhancing prostaglandin E2 synthesis resulting in the inhibition of renal Na+-K+-ATPase. May have a role in potassium excretion but not sodium excretion (natriuresis). Possibly enhances protein excretion in urine by decreasing proximal tubular protein reabsorption. Its function is as follows. Hormone produced in the kidneys that appears to be important for maintaining cardio-renal homeostasis. Mediates vasodilation, natriuresis and diuresis primarily in the renal system, in order to maintain the extracellular fluid volume and control the fluid-electrolyte balance. Specifically binds and stimulates cGMP production by renal transmembrane receptors, likely NPR1. Urodilatin not ANP, may be the natriuretic peptide responsible for the regulation of sodium and water homeostasis in the kidney. Functionally, may have a role in cardio-renal homeostasis through regulation of natriuresis and vasodilation. In vivo promotes natriuresis and in vitro, vasodilates renal artery strips. In terms of biological role, may have a role in cardio-renal homeostasis through regulation of regulation of natriuresis and vasodilation. In vivo promotes natriuresis. In vitro, vasodilates intestinal smooth muscle but not smooth muscle strips. May have a role in cardio-renal homeostasis through regulation of natriuresis and vasodilation. In vivo promotes natriuresis. In vitro, selectively vasodilates intestinal and vascular smooth muscle strips. Its function is as follows. May have a role in cardio-renal homeostasis through regulation of natriuresis and vasodilation. In vivo promotes natriuresis. In vitro, selectively vasodilates intestinal smooth muscle but not vascular smooth muscle strips. This is Natriuretic peptides A (NPPA) from Felis catus (Cat).